Consider the following 498-residue polypeptide: ATP synthase subunit beta, chloroplastic (498 aa).

ATP is bound at residue 172–179; sequence GGAGVGKT.

The protein belongs to the ATPase alpha/beta chains family. As to quaternary structure, F-type ATPases have 2 components, CF(1) - the catalytic core - and CF(0) - the membrane proton channel. CF(1) has five subunits: alpha(3), beta(3), gamma(1), delta(1), epsilon(1). CF(0) has four main subunits: a(1), b(1), b'(1) and c(9-12).

It is found in the plastid. It localises to the chloroplast thylakoid membrane. The enzyme catalyses ATP + H2O + 4 H(+)(in) = ADP + phosphate + 5 H(+)(out). Functionally, produces ATP from ADP in the presence of a proton gradient across the membrane. The catalytic sites are hosted primarily by the beta subunits. The protein is ATP synthase subunit beta, chloroplastic of Helianthus annuus (Common sunflower).